A 429-amino-acid chain; its full sequence is GTPase Obg (429 aa).

Residues 1–158 (MFYDTAKIYV…RWLLLELKLL (158 aa)) form the Obg domain. Residues 159-329 (ADVGLVGYPN…LIYRLWEIIS (171 aa)) form the OBG-type G domain. Residues 165 to 172 (GYPNAGKS), 190 to 194 (FTTLT), 212 to 215 (DIPG), 282 to 285 (NKMD), and 310 to 312 (SAL) contribute to the GTP site. Mg(2+)-binding residues include Ser172 and Thr192. The region spanning 344–421 (IKEQPEEGFV…IGKFEFYFVD (78 aa)) is the OCT domain.

It belongs to the TRAFAC class OBG-HflX-like GTPase superfamily. OBG GTPase family. Monomer. Requires Mg(2+) as cofactor.

The protein resides in the cytoplasm. Functionally, an essential GTPase which binds GTP, GDP and possibly (p)ppGpp with moderate affinity, with high nucleotide exchange rates and a fairly low GTP hydrolysis rate. Plays a role in control of the cell cycle, stress response, ribosome biogenesis and in those bacteria that undergo differentiation, in morphogenesis control. The polypeptide is GTPase Obg (Carboxydothermus hydrogenoformans (strain ATCC BAA-161 / DSM 6008 / Z-2901)).